The chain runs to 294 residues: Putative glutamine amidotransferase HI_1037 (294 aa).

Cys-18 is an active-site residue. Residues 18 to 266 (CQLLGMNCNT…NGGFVFFKNG (249 aa)) enclose the Glutamine amidotransferase type-2 domain.

This Haemophilus influenzae (strain ATCC 51907 / DSM 11121 / KW20 / Rd) protein is Putative glutamine amidotransferase HI_1037.